Reading from the N-terminus, the 600-residue chain is Isocitrate dehydrogenase kinase/phosphatase (600 aa).

ATP is bound by residues 335-341 (APGIRGM) and lysine 356. Aspartate 390 is a catalytic residue.

This sequence belongs to the AceK family.

It is found in the cytoplasm. The enzyme catalyses L-seryl-[isocitrate dehydrogenase] + ATP = O-phospho-L-seryl-[isocitrate dehydrogenase] + ADP + H(+). Bifunctional enzyme which can phosphorylate or dephosphorylate isocitrate dehydrogenase (IDH) on a specific serine residue. This is a regulatory mechanism which enables bacteria to bypass the Krebs cycle via the glyoxylate shunt in response to the source of carbon. When bacteria are grown on glucose, IDH is fully active and unphosphorylated, but when grown on acetate or ethanol, the activity of IDH declines drastically concomitant with its phosphorylation. The chain is Isocitrate dehydrogenase kinase/phosphatase from Bordetella parapertussis (strain 12822 / ATCC BAA-587 / NCTC 13253).